The following is a 92-amino-acid chain: Putative pterin-4-alpha-carbinolamine dehydratase (92 aa).

It belongs to the pterin-4-alpha-carbinolamine dehydratase family.

The enzyme catalyses (4aS,6R)-4a-hydroxy-L-erythro-5,6,7,8-tetrahydrobiopterin = (6R)-L-erythro-6,7-dihydrobiopterin + H2O. The protein is Putative pterin-4-alpha-carbinolamine dehydratase of Cereibacter sphaeroides (strain ATCC 17023 / DSM 158 / JCM 6121 / CCUG 31486 / LMG 2827 / NBRC 12203 / NCIMB 8253 / ATH 2.4.1.) (Rhodobacter sphaeroides).